The sequence spans 975 residues: Protein bicaudal D homolog 1 (975 aa).

2 coiled-coil regions span residues 1–265 and 319–496; these read MAAE…HISI and SELN…IANE. Disordered stretches follow at residues 383 to 403, 545 to 616, 800 to 824, 836 to 877, and 922 to 975; these read SSKE…GEEA, RSGS…LDTS, DHEQ…VSGE, LLHS…ASYL, and DCQQ…PPHP. Composition is skewed to basic and acidic residues over residues 385-403 and 581-590; these read KELK…GEEA and VAKESTEASK. A compositionally biased stretch (polar residues) spans 592 to 602; that stretch reads PSPTKTPTISP. Residues 663 to 803 are a coiled coil; it reads IDKDKEALME…LEDLEFDHEQ (141 aa). The segment at 663-803 is interaction with RAB6A; it reads IDKDKEALME…LEDLEFDHEQ (141 aa). Polar residues predominate over residues 840–877; that stretch reads QGPQTPNIRVSSGTQRKRQFSPSLCDQSRPRTSGASYL.

Belongs to the BicD family. As to quaternary structure, interacts with RAB6A. Interacts (via C-terminus) with RAB6B (GTP-bound); the interaction is direct. Interacts with CLIP-115 and KIFC2. (Microbial infection) Interacts with human cytomegalovirus/HHV-5 protein UL32. Expressed in the brain, heart and skeletal muscle.

The protein resides in the golgi apparatus. In terms of biological role, regulates coat complex coatomer protein I (COPI)-independent Golgi-endoplasmic reticulum transport by recruiting the dynein-dynactin motor complex. The polypeptide is Protein bicaudal D homolog 1 (BICD1) (Homo sapiens (Human)).